The following is a 111-amino-acid chain: Cytochrome c (111 aa).

Ser-1 is modified (N-acetylserine). Heme c-binding residues include Cys-22, Cys-25, and His-26. Lys-80 carries the N6,N6,N6-trimethyllysine modification. Met-88 is a heme c binding site.

It belongs to the cytochrome c family. Post-translationally, binds 1 heme c group covalently per subunit.

It localises to the mitochondrion intermembrane space. Functionally, electron carrier protein. The oxidized form of the cytochrome c heme group can accept an electron from the heme group of the cytochrome c1 subunit of cytochrome reductase. Cytochrome c then transfers this electron to the cytochrome oxidase complex, the final protein carrier in the mitochondrial electron-transport chain. This chain is Cytochrome c, found in Ulva intestinalis (Hollow green nori).